The primary structure comprises 367 residues: Anthranilate phosphoribosyltransferase (367 aa).

The span at 1 to 17 (MVLSSEASSAADHSAAA) shows a compositional bias: low complexity. Positions 1 to 22 (MVLSSEASSAADHSAAAPIPTS) are disordered. Residues G104, 107–108 (GD), T112, 114–117 (NLST), 132–140 (KHGNRAASS), and G144 contribute to the 5-phospho-alpha-D-ribose 1-diphosphate site. Residue G104 participates in anthranilate binding. S116 is a binding site for Mg(2+). N135 contacts anthranilate. R190 is an anthranilate binding site. Mg(2+) contacts are provided by D248 and E249.

Belongs to the anthranilate phosphoribosyltransferase family. As to quaternary structure, homodimer. Mg(2+) serves as cofactor.

It catalyses the reaction N-(5-phospho-beta-D-ribosyl)anthranilate + diphosphate = 5-phospho-alpha-D-ribose 1-diphosphate + anthranilate. The protein operates within amino-acid biosynthesis; L-tryptophan biosynthesis; L-tryptophan from chorismate: step 2/5. In terms of biological role, catalyzes the transfer of the phosphoribosyl group of 5-phosphorylribose-1-pyrophosphate (PRPP) to anthranilate to yield N-(5'-phosphoribosyl)-anthranilate (PRA). The polypeptide is Anthranilate phosphoribosyltransferase (Mycobacterium ulcerans (strain Agy99)).